Consider the following 573-residue polypeptide: Ascochitine biosynthesis cluster transcriptional regulator (573 aa).

It localises to the nucleus. In terms of biological role, transcription factor that regulates the expression of the gene cluster that mediates the biosynthesis of the mycotoxin ascochitine, an o-quinone methide that plays a possible protective role against other microbial competitors in nature and is considered to be important for pathogenicity of legume-associated Didymella species. This is Ascochitine biosynthesis cluster transcriptional regulator from Didymella fabae (Leaf and pod spot disease fungus).